We begin with the raw amino-acid sequence, 197 residues long: MMEKEYEYLVPPDDYLAAGVHIGTQIKTGDMKKFIFKVRQDGLYVLDIRKLDERIRVAAKFLSRYEPSKILLVAARQYAHKPVQMFSKVVGSDYIVGRFIPGTLTNPMLSEYREPEVVFVNDPAIDKQAVSEATAVGIPVVALCDSNNSSADVDLVIPTNNKGRRALAIVYWLLAREIAKIRGQDFTYSIEDFEAEL.

The protein belongs to the universal ribosomal protein uS2 family.

In Archaeoglobus fulgidus (strain ATCC 49558 / DSM 4304 / JCM 9628 / NBRC 100126 / VC-16), this protein is Small ribosomal subunit protein uS2 (rps2).